Reading from the N-terminus, the 210-residue chain is Probable GTP-binding protein EngB (210 aa).

Residues 30 to 204 (QGYEVAFAGR…YRVLADWMEL (175 aa)) form the EngB-type G domain. GTP contacts are provided by residues 38–45 (GRSNAGKS), 64–68 (GRTQL), 82–85 (DLPG), 149–152 (TKAD), and 182–185 (LFSA). Positions 45 and 66 each coordinate Mg(2+).

This sequence belongs to the TRAFAC class TrmE-Era-EngA-EngB-Septin-like GTPase superfamily. EngB GTPase family. The cofactor is Mg(2+).

Necessary for normal cell division and for the maintenance of normal septation. This Pseudomonas putida (strain ATCC 47054 / DSM 6125 / CFBP 8728 / NCIMB 11950 / KT2440) protein is Probable GTP-binding protein EngB.